The sequence spans 836 residues: TATA box-binding protein-associated factor RNA polymerase I subunit C (836 aa).

Disordered regions lie at residues 662-683 (GDLS…QQDE) and 703-836 (HRGE…RMGF). The span at 738–754 (DASSAPRSQDLSTSEAR) shows a compositional bias: polar residues. Positions 780–796 (RQTLRDHTDKLPLKRDT) are enriched in basic and acidic residues. T802 bears the Phosphothreonine mark. Over residues 803–828 (PPSQASSLQTMSFRQQTPVHSGSQPP) the composition is skewed to polar residues.

As to quaternary structure, component of the transcription factor SL1/TIF-IB complex, composed of TBP and at least TAF1A, TAF1B, TAF1C and TAF1D. In the complex interacts directly with TBP, TAF1A and TAF1B. Interaction of the SL1/TIF-IB subunits with TBP excludes interaction of TBP with the transcription factor IID (TFIID) subunits. Interacts with MYC and RRN3. Interacts with p53/TP53; the interaction prevents the association of SL1/TIF-IB with UBTF and represses RNA polymerase I transcription. Part of Pol I pre-initiation complex (PIC), in which Pol I core assembles with RRN3 and promoter-bound UTBF and SL1/TIF-IB complex.

It localises to the nucleus. Its subcellular location is the nucleolus. Its function is as follows. Component of the transcription factor SL1/TIF-IB complex, which is involved in the assembly of the PIC (pre-initiation complex) during RNA polymerase I-dependent transcription. The rate of PIC formation probably is primarily dependent on the rate of association of SL1/TIF-IB with the rDNA promoter. SL1/TIF-IB is involved in stabilization of nucleolar transcription factor 1/UBTF on rDNA. Formation of SL1/TIF-IB excludes the association of TBP with TFIID subunits. Recruits RNA polymerase I to the rRNA gene promoter via interaction with RRN3. The sequence is that of TATA box-binding protein-associated factor RNA polymerase I subunit C (Taf1c) from Mus musculus (Mouse).